Reading from the N-terminus, the 180-residue chain is GTP cyclohydrolase 1 (180 aa).

Residues Cys71, His74, and Cys142 each contribute to the Zn(2+) site.

The protein belongs to the GTP cyclohydrolase I family. As to quaternary structure, toroid-shaped homodecamer, composed of two pentamers of five dimers.

The enzyme catalyses GTP + H2O = 7,8-dihydroneopterin 3'-triphosphate + formate + H(+). It participates in cofactor biosynthesis; 7,8-dihydroneopterin triphosphate biosynthesis; 7,8-dihydroneopterin triphosphate from GTP: step 1/1. This chain is GTP cyclohydrolase 1, found in Helicobacter acinonychis (strain Sheeba).